The chain runs to 77 residues: MKLMIFTGLVLFAIVSLIEAQAENEKPCLPEYKVCTHAPGNCCSDLVCDCYGRYKSGAQIGRNCFCLQKGVIYKREN.

The first 20 residues, 1–20, serve as a signal peptide directing secretion; sequence MKLMIFTGLVLFAIVSLIEA. Positions 21–26 are excised as a propeptide; sequence QAENEK.

The protein belongs to the neurotoxin 19 (CSTX) family. 08 (U8-Lctx) subfamily. Contains 4 disulfide bonds. Expressed by the venom gland.

Its subcellular location is the secreted. The polypeptide is U8-lycotoxin-Ls1m (Lycosa singoriensis (Wolf spider)).